A 365-amino-acid chain; its full sequence is Carbamoyl phosphate synthase small chain (365 aa).

CPSase stretches follow at residues 1 to 166 and 1 to 169; these read MKRQ…PSPG and MKRQ…GRGH. L-glutamine-binding residues include serine 45, glycine 218, and glycine 220. Positions 170-357 constitute a Glutamine amidotransferase type-1 domain; that stretch reads RVVLVDFGMK…LTMIENFKKE (188 aa). The active-site Nucleophile is the cysteine 245. Leucine 246, glutamine 249, asparagine 287, glycine 289, and tyrosine 290 together coordinate L-glutamine. Residues histidine 330 and glutamate 332 contribute to the active site.

The protein belongs to the CarA family. In terms of assembly, composed of two chains; the small (or glutamine) chain promotes the hydrolysis of glutamine to ammonia, which is used by the large (or ammonia) chain to synthesize carbamoyl phosphate. Tetramer of heterodimers (alpha,beta)4.

The enzyme catalyses hydrogencarbonate + L-glutamine + 2 ATP + H2O = carbamoyl phosphate + L-glutamate + 2 ADP + phosphate + 2 H(+). It carries out the reaction L-glutamine + H2O = L-glutamate + NH4(+). Its pathway is amino-acid biosynthesis; L-arginine biosynthesis; carbamoyl phosphate from bicarbonate: step 1/1. It functions in the pathway pyrimidine metabolism; UMP biosynthesis via de novo pathway; (S)-dihydroorotate from bicarbonate: step 1/3. In terms of biological role, small subunit of the glutamine-dependent carbamoyl phosphate synthetase (CPSase). CPSase catalyzes the formation of carbamoyl phosphate from the ammonia moiety of glutamine, carbonate, and phosphate donated by ATP, constituting the first step of 2 biosynthetic pathways, one leading to arginine and/or urea and the other to pyrimidine nucleotides. The small subunit (glutamine amidotransferase) binds and cleaves glutamine to supply the large subunit with the substrate ammonia. In Bacillus anthracis, this protein is Carbamoyl phosphate synthase small chain.